We begin with the raw amino-acid sequence, 398 residues long: MKFTLISSCVALACMALAVEAAPSGKKINVPLSKNANYKPNAKRAIEKANAKYARFRSSSSSSSSSSCGSAGTESSGSVPVTDDGNDIEYYGEVTVGTPGIKLKLDFDTGSSDLWFASTLCTNCGSSQTKYDPSQSSTYAKDGRTWSISYGDGSSASGILGKDTVNLGGLKIKNQIIELAKREASSFSSGPSDGLLGLGFDSITTVSGVQTPMDNLISQGLISNPVFGVYLGKESNGGGGEYIFGGYDSSKFSGDLTTIAVDNSNGWYGITIDGASISGSQVSDSFSAILDTGTTLLILPSNVASSVAQAYNANDNGDGTYNINCDTSELQPLVFTIGGSTFEVPTDSLIFEQDGNTCVAGFGYGQDDFAIFGDVFLKNNYVVFNPQVPQVQIAPISN.

The signal sequence occupies residues 1-21 (MKFTLISSCVALACMALAVEA). Residues 22–74 (APSGKKINVPLSKNANYKPNAKRAIEKANAKYARFRSSSSSSSSSSCGSAGTE) constitute a propeptide, activation peptide. A compositionally biased stretch (low complexity) spans 58–78 (SSSSSSSSSSCGSAGTESSGS). Residues 58–83 (SSSSSSSSSSCGSAGTESSGSVPVTD) form a disordered region. The Peptidase A1 domain occupies 90 to 394 (YYGEVTVGTP…NPQVPQVQIA (305 aa)). Asp-108 is a catalytic residue. The cysteines at positions 121 and 124 are disulfide-linked. Asp-291 is an active-site residue. The cysteines at positions 325 and 358 are disulfide-linked.

It belongs to the peptidase A1 family.

The enzyme catalyses Hydrolysis of proteins with broad specificity similar to that of pepsin A, preferring hydrophobic residues at P1 and P1'. Clots milk and activates trypsinogen. Does not cleave 4-Gln-|-His-5, but does cleave 10-His-|-Leu-11 and 12-Val-|-Glu-13 in B chain of insulin.. The sequence is that of Rhizopuspepsin-4 from Rhizopus niveus.